The primary structure comprises 697 residues: SPX domain-containing membrane protein OsI_08463 (697 aa).

Residues 2–145 (VNFGKRLMAD…GYKFTDYYVS (144 aa)) form the SPX domain. Helical transmembrane passes span 247–267 (FMSLLLNLANTFLYMVNTYII), 278–298 (LGAAATVCGVIIGSMAVAQVF), 315–335 (LVFSSIMLFLGNLLYALAYDV), 338–356 (LTVLIVGRLLCGLGSARAV), 375–395 (AGFVSASALGMACGPALAGLL), 411–431 (LPGWIMCLAWITYLFWLWISF), 513–533 (LLIYFMLKFAMEILLSESSVV), 544–564 (TVAMFLAVLGLTVLPVNVIVG), 576–596 (ILVASEIMVLIGIAMSFRFTS), 604–624 (VSSALITFVFAEVLEGVNLSL), and 670–690 (LLNVTLLPSFVICVASIVATF).

It belongs to the major facilitator superfamily.

The protein resides in the membrane. This chain is SPX domain-containing membrane protein OsI_08463, found in Oryza sativa subsp. indica (Rice).